The following is a 264-amino-acid chain: Thymidylate synthase (264 aa).

R21 contributes to the dUMP binding site. H51 contacts (6R)-5,10-methylene-5,6,7,8-tetrahydrofolate. Residue 126 to 127 (RR) coordinates dUMP. C146 acts as the Nucleophile in catalysis. DUMP contacts are provided by residues 166–169 (RSAD), N177, and 207–209 (HLY). D169 lines the (6R)-5,10-methylene-5,6,7,8-tetrahydrofolate pocket. A263 lines the (6R)-5,10-methylene-5,6,7,8-tetrahydrofolate pocket.

It belongs to the thymidylate synthase family. Bacterial-type ThyA subfamily. In terms of assembly, homodimer.

Its subcellular location is the cytoplasm. The enzyme catalyses dUMP + (6R)-5,10-methylene-5,6,7,8-tetrahydrofolate = 7,8-dihydrofolate + dTMP. The protein operates within pyrimidine metabolism; dTTP biosynthesis. Functionally, catalyzes the reductive methylation of 2'-deoxyuridine-5'-monophosphate (dUMP) to 2'-deoxythymidine-5'-monophosphate (dTMP) while utilizing 5,10-methylenetetrahydrofolate (mTHF) as the methyl donor and reductant in the reaction, yielding dihydrofolate (DHF) as a by-product. This enzymatic reaction provides an intracellular de novo source of dTMP, an essential precursor for DNA biosynthesis. This Ralstonia nicotianae (strain ATCC BAA-1114 / GMI1000) (Ralstonia solanacearum) protein is Thymidylate synthase.